We begin with the raw amino-acid sequence, 1440 residues long: MAVSAGALAFPALSVRATLNPEIKDEQANISSTTSSSQKFTYSRASPAVRWPHLNLREIYDSTPSQTLSSPVSPIAGTPDSGDVVDSIASREEQKTKDETAVATRRRRVKKMNKVALIKAKDWRERVKFLTDKILSLKSNQFVADILDARLVQMTPTDYCFVVKSVGQESWQRALEVFEWLNLRHWHSPNARMVAAILGVLGRWNQESLAVEIFTRAEPTVGDRVQVYNAMMGVYSRSGKFSKAQELVDAMRQRGCVPDLISFNTLINARLKSGGLTPNLAVELLDMVRNSGLRPDAITYNTLLSACSRDSNLDGAVKVFEDMEAHRCQPDLWTYNAMISVYGRCGLAAEAERLFMELELKGFFPDAVTYNSLLYAFARERNTEKVKEVYQQMQKMGFGKDEMTYNTIIHMYGKQGQLDLALQLYKDMKGLSGRNPDAITYTVLIDSLGKANRTVEAAALMSEMLDVGIKPTLQTYSALICGYAKAGKREEAEDTFSCMLRSGTKPDNLAYSVMLDVLLRGNETRKAWGLYRDMISDGHTPSYTLYELMILGLMKENRSDDIQKTIRDMEELCGMNPLEISSVLVKGECFDLAARQLKVAITNGYELENDTLLSILGSYSSSGRHSEAFELLEFLKEHASGSKRLITEALIVLHCKVNNLSAALDEYFADPCVHGWCFGSSTMYETLLHCCVANEHYAEASQVFSDLRLSGCEASESVCKSMVVVYCKLGFPETAHQVVNQAETKGFHFACSPMYTDIIEAYGKQKLWQKAESVVGNLRQSGRTPDLKTWNSLMSAYAQCGCYERARAIFNTMMRDGPSPTVESINILLHALCVDGRLEELYVVVEELQDMGFKISKSSILLMLDAFARAGNIFEVKKIYSSMKAAGYLPTIRLYRMMIELLCKGKRVRDAEIMVSEMEEANFKVELAIWNSMLKMYTAIEDYKKTVQVYQRIKETGLEPDETTYNTLIIMYCRDRRPEEGYLLMQQMRNLGLDPKLDTYKSLISAFGKQKCLEQAEQLFEELLSKGLKLDRSFYHTMMKISRDSGSDSKAEKLLQMMKNAGIEPTLATMHLLMVSYSSSGNPQEAEKVLSNLKDTEVELTTLPYSSVIDAYLRSKDYNSGIERLLEMKKEGLEPDHRIWTCFVRAASFSKEKIEVMLLLKALEDIGFDLPIRLLAGRPELLVSEVDGWFEKLKSIEDNAALNFVNALLNLLWAFELRATASWVFQLGIKRGIFSLDVFRVADKDWGADFRRLSGGAALVALTLWLDHMQDASLEGYPESPKSVVLITGTAEYNGISLDKTLKACLWEMGSPFLPCKTRTGLLVAKAHSLRMWLKDSPFCFDLELKDSVSLPESNSMDLIDGCFIRRGLVPAFNHIKERLGGFVSPKKFSRLALLPDEMRERVIKTDIEGHRQKLEKMKKKKMGNETNGINTRRKFVRSK.

The N-terminal 44 residues, 1–44, are a transit peptide targeting the chloroplast; the sequence is MAVSAGALAFPALSVRATLNPEIKDEQANISSTTSSSQKFTYSR. Residues 63–72 show a composition bias toward polar residues; the sequence is TPSQTLSSPV. Residues 63-84 form a disordered region; that stretch reads TPSQTLSSPVSPIAGTPDSGDV. 25 PPR repeats span residues 224–258, 259–295, 296–330, 331–365, 366–400, 401–431, 437–471, 472–506, 507–541, 542–572, 608–638, 643–678, 680–714, 715–749, 751–785, 786–820, 821–855, 856–890, 891–925, 926–960, 961–995, 996–1030, 1031–1065, 1066–1100, and 1101–1135; these read RVQVYNAMMGVYSRSGKFSKAQELVDAMRQRGCVP, DLISFNTLINARLKSGGLTPNLAVELLDMVRNSGLRP, DAITYNTLLSACSRDSNLDGAVKVFEDMEAHRCQP, DLWTYNAMISVYGRCGLAAEAERLFMELELKGFFP, DAVTYNSLLYAFARERNTEKVKEVYQQMQKMGFGK, DEMTYNTIIHMYGKQGQLDLALQLYKDMKGL, DAITYTVLIDSLGKANRTVEAAALMSEMLDVGIKP, TLQTYSALICGYAKAGKREEAEDTFSCMLRSGTKP, DNLAYSVMLDVLLRGNETRKAWGLYRDMISDGHTP, SYTLYELMILGLMKENRSDDIQKTIRDMEEL, ENDTLLSILGSYSSSGRHSEAFELLEFLKEH, KRLITEALIVLHCKVNNLSAALDEYFADPCVHGWCF, SSTMYETLLHCCVANEHYAEASQVFSDLRLSGCEA, SESVCKSMVVVYCKLGFPETAHQVVNQAETKGFHF, CSPMYTDIIEAYGKQKLWQKAESVVGNLRQSGRTP, DLKTWNSLMSAYAQCGCYERARAIFNTMMRDGPSP, TVESINILLHALCVDGRLEELYVVVEELQDMGFKI, SKSSILLMLDAFARAGNIFEVKKIYSSMKAAGYLP, TIRLYRMMIELLCKGKRVRDAEIMVSEMEEANFKV, ELAIWNSMLKMYTAIEDYKKTVQVYQRIKETGLEP, DETTYNTLIIMYCRDRRPEEGYLLMQQMRNLGLDP, KLDTYKSLISAFGKQKCLEQAEQLFEELLSKGLKL, DRSFYHTMMKISRDSGSDSKAEKLLQMMKNAGIEP, TLATMHLLMVSYSSSGNPQEAEKVLSNLKDTEVEL, and TTLPYSSVIDAYLRSKDYNSGIERLLEMKKEGLEP. Residues 1419-1440 form a disordered region; that stretch reads KKKKMGNETNGINTRRKFVRSK.

The protein belongs to the PPR family. P subfamily.

Its subcellular location is the plastid. It is found in the chloroplast. May play a role in embryogenesis. This chain is Pentatricopeptide repeat-containing protein At3g18110, chloroplastic (EMB1270), found in Arabidopsis thaliana (Mouse-ear cress).